We begin with the raw amino-acid sequence, 104 residues long: Large ribosomal subunit protein uL24 (104 aa).

It belongs to the universal ribosomal protein uL24 family. As to quaternary structure, part of the 50S ribosomal subunit.

Functionally, one of two assembly initiator proteins, it binds directly to the 5'-end of the 23S rRNA, where it nucleates assembly of the 50S subunit. Its function is as follows. One of the proteins that surrounds the polypeptide exit tunnel on the outside of the subunit. The protein is Large ribosomal subunit protein uL24 of Shewanella halifaxensis (strain HAW-EB4).